The following is a 266-amino-acid chain: Nitrate import ATP-binding protein NrtD (266 aa).

In terms of domain architecture, ABC transporter spans 3 to 234 (LEITDLNRVF…DEETPKNRTY (232 aa)). 39-46 (GASGSGKS) is an ATP binding site.

This sequence belongs to the ABC transporter superfamily. Nitrate/nitrite/cyanate uptake transporter (NitT) (TC 3.A.1.16) family. The complex is composed of two ATP-binding proteins (NrtC and NrtD), two transmembrane proteins (NrtB) and a solute-binding protein (NrtA).

The protein resides in the cell inner membrane. The enzyme catalyses nitrate(out) + ATP + H2O = nitrate(in) + ADP + phosphate + H(+). Functionally, part of the ABC transporter complex NrtABCD involved in nitrate uptake. The complex is probably also involved in nitrite transport. Probably responsible for energy coupling to the transport system. This is Nitrate import ATP-binding protein NrtD (nrtD) from Synechocystis sp. (strain ATCC 27184 / PCC 6803 / Kazusa).